Here is a 211-residue protein sequence, read N- to C-terminus: Bifunctional transcriptional activator/DNA repair enzyme AdaA (211 aa).

Residue C54 is the Nucleophile; methyl group acceptor from methylphosphotriester of the active site. The Zn(2+) site is built by C54, C58, C85, and C88. Residues 102–200 (DLITEYIDKN…GQTPARFRQM (99 aa)) form the HTH araC/xylS-type domain. The H-T-H motif DNA-binding region spans 119–140 (ESLADICHGSPYHMHRTFKKIK).

Zn(2+) is required as a cofactor.

The enzyme catalyses (2'-deoxyribonucleoside 5'-methylphosphotriester)-DNA + L-cysteinyl-[protein] = 2'-deoxyribonucleotide-DNA + S-methyl-L-cysteinyl-[protein] + H(+). Its function is as follows. Is involved in the adaptive response to alkylation damage in DNA caused by alkylating agents. Repairs the methylphosphotriester lesions in DNA by a direct and irreversible transfer of the methyl group to one of its own cysteine residues. In terms of biological role, the methylation of AdaA by methylphosphotriesters in DNA leads to its activation as a transcriptional regulator that activates the transcription of the ada operon which consists of adaA and adaB, and of the adjacent gene alkA. The protein is Bifunctional transcriptional activator/DNA repair enzyme AdaA (adaA) of Bacillus subtilis (strain 168).